Reading from the N-terminus, the 603-residue chain is Elongation factor 4 (603 aa).

The tr-type G domain occupies 6–188 (KYVRNFSIIA…DIVKNVPAPI (183 aa)). Residues 18–23 (DHGKST) and 135–138 (NKID) contribute to the GTP site.

This sequence belongs to the TRAFAC class translation factor GTPase superfamily. Classic translation factor GTPase family. LepA subfamily.

It localises to the cell membrane. The catalysed reaction is GTP + H2O = GDP + phosphate + H(+). Its function is as follows. Required for accurate and efficient protein synthesis under certain stress conditions. May act as a fidelity factor of the translation reaction, by catalyzing a one-codon backward translocation of tRNAs on improperly translocated ribosomes. Back-translocation proceeds from a post-translocation (POST) complex to a pre-translocation (PRE) complex, thus giving elongation factor G a second chance to translocate the tRNAs correctly. Binds to ribosomes in a GTP-dependent manner. In Finegoldia magna (strain ATCC 29328 / DSM 20472 / WAL 2508) (Peptostreptococcus magnus), this protein is Elongation factor 4.